The chain runs to 67 residues: DNA-directed RNA polymerase subunit omega (67 aa).

The protein belongs to the RNA polymerase subunit omega family. The RNAP catalytic core consists of 2 alpha, 1 beta, 1 beta' and 1 omega subunit. When a sigma factor is associated with the core the holoenzyme is formed, which can initiate transcription.

The catalysed reaction is RNA(n) + a ribonucleoside 5'-triphosphate = RNA(n+1) + diphosphate. Promotes RNA polymerase assembly. Latches the N- and C-terminal regions of the beta' subunit thereby facilitating its interaction with the beta and alpha subunits. This chain is DNA-directed RNA polymerase subunit omega, found in Nautilia profundicola (strain ATCC BAA-1463 / DSM 18972 / AmH).